The following is a 622-amino-acid chain: Probable potassium transport system protein Kup (622 aa).

A run of 12 helical transmembrane segments spans residues 8 to 28, 50 to 70, 101 to 121, 137 to 157, 165 to 185, 213 to 233, 247 to 267, 285 to 305, 337 to 357, 366 to 386, 393 to 413, and 419 to 439; these read LAVLTVGAIGVVYGDIGTSVL, ILSIFFWTLTVIVSLKYVSLV, VLLLVGIFGTSLFYGDGVITP, PTFTKAVIPTTLVILFGLFAM, IGKFFGPITIVWFAVLALLGV, ITFIILGAVVLCVTGAEALYA, WFSVVMPSLVLNYFGQGALLL, ALIPLVVLATLATVIASQALI, IYMPFVNWGLFVTIVLAVVMF, AYGIAVCTDMLITTILTFYVI, PLALCIAATSVFFLVDFAFFA, and LFAGGWFPLVIGGAVFTLMIT.

Belongs to the HAK/KUP transporter (TC 2.A.72) family.

It is found in the cell inner membrane. The enzyme catalyses K(+)(in) + H(+)(in) = K(+)(out) + H(+)(out). In terms of biological role, transport of potassium into the cell. Likely operates as a K(+):H(+) symporter. The chain is Probable potassium transport system protein Kup from Polaromonas naphthalenivorans (strain CJ2).